Reading from the N-terminus, the 309-residue chain is Putative HTH-type transcriptional regulatory protein AF_1787 (309 aa).

The region spanning 131-185 (IREARERLGLSVGDMAKMLGVSRRTVKKYEEGTDTTLSTAAKIEEIIGTFAIKEI) is the HTH cro/C1-type domain. A DNA-binding region (H-T-H motif) is located at residues 142–161 (VGDMAKMLGVSRRTVKKYEE).

The sequence is that of Putative HTH-type transcriptional regulatory protein AF_1787 from Archaeoglobus fulgidus (strain ATCC 49558 / DSM 4304 / JCM 9628 / NBRC 100126 / VC-16).